The chain runs to 124 residues: Large-conductance mechanosensitive channel (124 aa).

3 helical membrane passes run 14-34 (VIDLAVGVIIGAAFTAIVQSL), 37-57 (NLINPLIGIFVGKIDLSNLVF), and 67-87 (GSFINSVINFLIISFVVFLIV).

The protein belongs to the MscL family. As to quaternary structure, homopentamer.

It localises to the cell membrane. In terms of biological role, channel that opens in response to stretch forces in the membrane lipid bilayer. May participate in the regulation of osmotic pressure changes within the cell. The sequence is that of Large-conductance mechanosensitive channel from Lactobacillus acidophilus (strain ATCC 700396 / NCK56 / N2 / NCFM).